The following is a 135-amino-acid chain: Large ribosomal subunit protein uL22c (135 aa).

This sequence belongs to the universal ribosomal protein uL22 family. Part of the 50S ribosomal subunit.

It localises to the plastid. Its function is as follows. This protein binds specifically to 23S rRNA. In terms of biological role, the globular domain of the protein is located near the polypeptide exit tunnel on the outside of the subunit, while an extended beta-hairpin is found that lines the wall of the exit tunnel in the center of the 70S ribosome. The protein is Large ribosomal subunit protein uL22c (rpl22) of Cuscuta reflexa (Southern Asian dodder).